A 337-amino-acid polypeptide reads, in one-letter code: Outer membrane protein assembly factor BamC (337 aa).

Positions 1-16 (MKKWLFPFAFVATLAG) are cleaved as a signal peptide. A lipid anchor (N-palmitoyl cysteine) is attached at Cys-17. Residue Cys-17 is the site of S-diacylglycerol cysteine attachment.

It belongs to the BamC family. In terms of assembly, part of the Bam complex.

The protein localises to the cell outer membrane. Functionally, part of the outer membrane protein assembly complex, which is involved in assembly and insertion of beta-barrel proteins into the outer membrane. In Pasteurella multocida (strain Pm70), this protein is Outer membrane protein assembly factor BamC.